The primary structure comprises 33 residues: U1-pseudomyrmecitoxin-Pt1 subunit LS1 (33 aa).

Belongs to the myrmexin family. Heterodimer composed of subunit LS1 and subunit SS1 (U1-PSDTX-Pt1b), heterodimer composed of subunit LS1 and SS2 (U1-PSDTX-Pt1b), and heterodimer composed of subunit LS1 and SS3; disulfide-linked. As to expression, expressed by the venom gland.

Its subcellular location is the secreted. This heterodimer may have anti-inflammatory properties, since the myrmexin complex (composed of 6 SS-LS heterodimers) inhibits carrageenin-induced edema in a dose-dependent manner (after subcutaneous injection into rats). This is U1-pseudomyrmecitoxin-Pt1 subunit LS1 from Pseudomyrmex triplarinus (Ant).